Here is a 399-residue protein sequence, read N- to C-terminus: Tryptophan synthase beta chain (399 aa).

Lysine 90 is subject to N6-(pyridoxal phosphate)lysine.

The protein belongs to the TrpB family. Tetramer of two alpha and two beta chains. Requires pyridoxal 5'-phosphate as cofactor.

It catalyses the reaction (1S,2R)-1-C-(indol-3-yl)glycerol 3-phosphate + L-serine = D-glyceraldehyde 3-phosphate + L-tryptophan + H2O. The protein operates within amino-acid biosynthesis; L-tryptophan biosynthesis; L-tryptophan from chorismate: step 5/5. Functionally, the beta subunit is responsible for the synthesis of L-tryptophan from indole and L-serine. The protein is Tryptophan synthase beta chain of Lactiplantibacillus plantarum (strain ATCC BAA-793 / NCIMB 8826 / WCFS1) (Lactobacillus plantarum).